The following is a 116-amino-acid chain: Large ribosomal subunit protein bL19 (116 aa).

Belongs to the bacterial ribosomal protein bL19 family.

This protein is located at the 30S-50S ribosomal subunit interface and may play a role in the structure and function of the aminoacyl-tRNA binding site. The chain is Large ribosomal subunit protein bL19 from Staphylococcus carnosus (strain TM300).